Here is a 928-residue protein sequence, read N- to C-terminus: Eukaryotic translation initiation factor 3 subunit C (928 aa).

Disordered regions lie at residues 1 to 37 (MSRFFANGSDSESESSEEEVPTQFNNKAQNFQFSDDE) and 157 to 286 (FREA…EDGE). Positions 11 to 20 (SESESSEEEV) are enriched in acidic residues. The span at 22 to 33 (TQFNNKAQNFQF) shows a compositional bias: polar residues. Phosphoserine occurs at positions 34, 165, 177, and 186. Residues 162-171 (DQESDVDEGE) are compositionally biased toward acidic residues. Residues 172–184 (GDVHDSDADRAGD) show a composition bias toward basic and acidic residues. Residues 215-240 (DDDDSEDSIDWDPDTESETESSEDEN) show a composition bias toward acidic residues. Residues 245 to 264 (MRERFLKRTTEKEDKDDDKR) are compositionally biased toward basic and acidic residues. Residues 265 to 277 (KDKRKEQKHKVRK) are compositionally biased toward basic residues. The 177-residue stretch at 656–832 (FHMHINLELL…ETVVMHRSEP (177 aa)) folds into the PCI domain. The interval 864–928 (FFQRGNMGNR…QQQVHTIDEE (65 aa)) is disordered. The segment covering 898-909 (QRNRNQRGHHKQ) has biased composition (basic residues). Residues 910–921 (NQQQNQQQQQQQ) are compositionally biased toward low complexity.

It belongs to the eIF-3 subunit C family. In terms of assembly, component of the eukaryotic translation initiation factor 3 (eIF-3) complex. The eIF-3 complex interacts with pix.

The protein localises to the cytoplasm. Component of the eukaryotic translation initiation factor 3 (eIF-3) complex, which is involved in protein synthesis of a specialized repertoire of mRNAs and, together with other initiation factors, stimulates binding of mRNA and methionyl-tRNAi to the 40S ribosome. The eIF-3 complex specifically targets and initiates translation of a subset of mRNAs involved in cell proliferation. The sequence is that of Eukaryotic translation initiation factor 3 subunit C from Drosophila grimshawi (Hawaiian fruit fly).